Reading from the N-terminus, the 196-residue chain is uncharacterized protein (196 aa).

This is an uncharacterized protein from Methanocaldococcus jannaschii (strain ATCC 43067 / DSM 2661 / JAL-1 / JCM 10045 / NBRC 100440) (Methanococcus jannaschii).